Consider the following 963-residue polypeptide: Importin-13 (963 aa).

HEAT repeat units follow at residues 24–54, 56–88, 95–135, 142–179, 194–231, 236–268, 276–325, 330–372, 375–438, 440–476, 487–522, 524–558, 562–600, 603–648, 676–716, 720–754, 761–803, 815–845, 860–893, and 897–931; these read ENVE…QAQV, PQAW…KISR, TDQY…LSMM, AVAD…EFQT, LAVE…SWVQ, LQDC…NAIS, VNTL…ALLD, WQSF…DDIL, EAEK…YEML, AELL…FQSI, VVPG…WLAD, PVMI…CREC, LPPY…LLSA, VEEI…SNLF, PVVV…VKTL, FAPM…VHIF, FPPI…ALKR, VKAV…TELL, EDGR…FALN, and FSLL…QQIL. The region spanning 45–111 is the Importin N-terminal domain; the sequence is AQKWLMQAQV…KAQLFTQITR (67 aa).

It belongs to the importin beta family. Interacts with UBC9, RAN, RBM8A, eIF-1A and PAX6.

The protein resides in the cytoplasm. The protein localises to the nucleus. Functions in nuclear protein import as nuclear transport receptor. Serves as receptor for nuclear localization signals (NLS) in cargo substrates. Is thought to mediate docking of the importin/substrate complex to the nuclear pore complex (NPC) through binding to nucleoporin and the complex is subsequently translocated through the pore by an energy requiring, Ran-dependent mechanism. At the nucleoplasmic side of the NPC, Ran binds to the importin, the importin/substrate complex dissociates and importin is re-exported from the nucleus to the cytoplasm where GTP hydrolysis releases Ran. The directionality of nuclear import is thought to be conferred by an asymmetric distribution of the GTP- and GDP-bound forms of Ran between the cytoplasm and nucleus. Mediates the nuclear import of UBC9, the RBM8A/MAGOH complex, PAX6 and probably other members of the paired homeobox family. Also mediates nuclear export of eIF-1A, and the cytoplasmic release of eIF-1A is triggered by the loading of import substrates onto IPO13. This chain is Importin-13 (Ipo13), found in Mus musculus (Mouse).